Consider the following 846-residue polypeptide: Protein IRS1 (846 aa).

Disordered regions lie at residues 1 to 82, 366 to 385, 606 to 626, and 714 to 846; these read MAQR…NFWH, TGTA…ETEA, WLME…ATMP, and QVIP…HVHH. Residues 16-25 show a composition bias toward gly residues; it reads RGRGAGGPSG. Residues 26–56 show a composition bias toward low complexity; that stretch reads VGSSPPSSCVPMGAPSTAGTGASAAATTTPG. Residues 722–732 show a composition bias toward acidic residues; sequence EPEDDDEDPTY. The segment covering 832-846 has biased composition (basic residues); it reads RPKKCQTHAPHHVHH.

The protein belongs to the herpesviridae US22 family. As to quaternary structure, interacts (via N-terminus) with the viral DNA polymerase accessory subunit UL44. Interacts (via C-terminus) with host EIF2AK2/PKR.

The protein localises to the virion. It is found in the host cytoplasm. The protein resides in the host nucleus. In terms of biological role, inhibits the establishment of the antiviral state in the infected cell. Prevents the phosphorylation of the host eukaryotic translation initiation factor eIF-2alpha and thus the shutoff of viral and cellular protein synthesis by directly interacting with EIF2AK2/PKR. May also participate in viral DNA replication by interacting with the DNA polymerase accessory protein and the lytic origin of replication, oriLyt. In Homo sapiens (Human), this protein is Protein IRS1 (IRS1).